Consider the following 165-residue polypeptide: V-type proton ATPase 16 kDa proteolipid subunit (165 aa).

The Lumenal segment spans residues 1–10 (MSSVFSGDET). A helical membrane pass occupies residues 11-33 (APFFGFLGAAAALVFSCMGAAYG). Residues 34-55 (TAKSGVGVASMGVMRPELVMKS) are Cytoplasmic-facing. A helical transmembrane segment spans residues 56 to 76 (IVPVVMAGVLGIYGLIIAVII). The Lumenal segment spans residues 77–95 (STGINPKAKPYFLFDGYAH). A helical transmembrane segment spans residues 96-117 (LSSGLACGLAGLAAGMAIGIVG). At 118–129 (DAGVRANAQQPK) the chain is on the cytoplasmic side. A helical transmembrane segment spans residues 130–155 (LFVGMILILIFAEALALYGLIVGIIL). Residues 156-165 (SSRAGQSRAD) are Lumenal-facing.

This sequence belongs to the V-ATPase proteolipid subunit family. As to quaternary structure, V-ATPase is a heteromultimeric enzyme composed of a peripheral catalytic V1 complex (main components: subunits A, B, C, D, E, and F) attached to an integral membrane V0 proton pore complex (main component: the proteolipid protein; which is present as a hexamer that forms the proton-conducting pore).

The protein resides in the vacuole membrane. Proton-conducting pore forming subunit of the membrane integral V0 complex of vacuolar ATPase. V-ATPase is responsible for acidifying a variety of intracellular compartments in eukaryotic cells. The polypeptide is V-type proton ATPase 16 kDa proteolipid subunit (VATP-P1) (Avena sativa (Oat)).